The following is a 228-amino-acid chain: Urease accessory protein UreF (228 aa).

This sequence belongs to the UreF family. In terms of assembly, ureD, UreF and UreG form a complex that acts as a GTP-hydrolysis-dependent molecular chaperone, activating the urease apoprotein by helping to assemble the nickel containing metallocenter of UreC. The UreE protein probably delivers the nickel.

It localises to the cytoplasm. Functionally, required for maturation of urease via the functional incorporation of the urease nickel metallocenter. This chain is Urease accessory protein UreF, found in Blochmanniella pennsylvanica (strain BPEN).